A 46-amino-acid polypeptide reads, in one-letter code: Photosystem II reaction center protein K (46 aa).

Residues 1–9 constitute a propeptide that is removed on maturation; sequence MLTLLNTFA. A helical membrane pass occupies residues 25–45; it reads LPLIPLFFFLLVFVWQAAVGF.

Belongs to the PsbK family. As to quaternary structure, PSII is composed of 1 copy each of membrane proteins PsbA, PsbB, PsbC, PsbD, PsbE, PsbF, PsbH, PsbI, PsbJ, PsbK, PsbL, PsbM, PsbT, PsbX, PsbY, Psb30/Ycf12, peripheral proteins PsbO, CyanoQ (PsbQ), PsbU, PsbV and a large number of cofactors. It forms dimeric complexes.

It localises to the cellular thylakoid membrane. In terms of biological role, one of the components of the core complex of photosystem II (PSII). PSII is a light-driven water:plastoquinone oxidoreductase that uses light energy to abstract electrons from H(2)O, generating O(2) and a proton gradient subsequently used for ATP formation. It consists of a core antenna complex that captures photons, and an electron transfer chain that converts photonic excitation into a charge separation. The sequence is that of Photosystem II reaction center protein K from Prochlorococcus marinus (strain MIT 9515).